A 544-amino-acid polypeptide reads, in one-letter code: MSAKAIKFNHHAREKMLKGVNILADSVKVTLGPKGRNVVIAQKYSRPIITKDGVTVAKEIELIDPFENMGAQLTKEVAFQASDSAGDGTTTATVLTQAIVNEGVNAISANMNPIDLKKGIDKCLHYALLELNLLSQNCDNLEKAEQIATISANGEEQIGKLIAQAMERIGTDGVVSVEDAQGYDDELIFKEGLAFDRGYLSPYFINNHEKSTVELNNPSILLLDDKLTHMEDLLPLLEKLANNRNPLLVIAEDINNEVLSRIIGNNMKNNLKVTVIKSPAFGSRRTEILQDLAIYTGGTVISPEIGMDLSEVDTDKLGNASKIIITDSNTTIVHGEGDPQLIMQRIKQLNSQLLNSSSEYDQKKLAERVAKLSGAIAIIKVGAATEVAMKEKKDRVEDALHATKAAIKEGIVPGGGVAYIRIAQTLASLEGDNPDQSFGIKILLKAMESPLKQIAKNAGNEPVEVLSTIKKQTGNFGFDAKNDRYGDMMEFGIIDPTKVTRCALEFAASIASLILTTEVMVADMEDNNANHANHDHAHSLNCSH.

ATP is bound by residues 30-33 (TLGP), lysine 51, 87-91 (DGTTT), glycine 415, and aspartate 495.

The protein belongs to the chaperonin (HSP60) family. In terms of assembly, forms a cylinder of 14 subunits composed of two heptameric rings stacked back-to-back. Interacts with the co-chaperonin GroES.

It localises to the cytoplasm. The enzyme catalyses ATP + H2O + a folded polypeptide = ADP + phosphate + an unfolded polypeptide.. In terms of biological role, together with its co-chaperonin GroES, plays an essential role in assisting protein folding. The GroEL-GroES system forms a nano-cage that allows encapsulation of the non-native substrate proteins and provides a physical environment optimized to promote and accelerate protein folding. This Psychromonas ingrahamii (strain DSM 17664 / CCUG 51855 / 37) protein is Chaperonin GroEL 3.